The sequence spans 304 residues: Thyroxine 5-deiodinase (304 aa).

A disordered region spans residues 1–22 (MPRQAASRLVVGEGEGPPGASG). The Cytoplasmic portion of the chain corresponds to 1 to 42 (MPRQAASRLVVGEGEGPPGASGPAATMLRSLLLHSLRLCAQT). The chain crosses the membrane as a helical; Signal-anchor for type II membrane protein span at residues 43–62 (ASCLVLFPRFLGTAFMLWLL). At 63-304 (DFLCIRKHFL…QLHGTRPRRL (242 aa)) the chain is on the extracellular side. Sec170 is an active-site residue. Sec170 is a non-standard amino acid (selenocysteine).

This sequence belongs to the iodothyronine deiodinase family. Monomer. Homodimer. May undergo minor heretodimerization with DIO1 and DIO2. As to expression, neonatal skin, placenta, skeletal muscle and cerebral cortex.

Its subcellular location is the cell membrane. The protein localises to the endosome membrane. It catalyses the reaction 3,3',5'-triiodo-L-thyronine + iodide + A + H(+) = L-thyroxine + AH2. The enzyme catalyses 3,3'-diiodo-L-thyronine + iodide + A + H(+) = 3,3',5-triiodo-L-thyronine + AH2. The catalysed reaction is 3-iodo-L-thyronine + iodide + A + H(+) = 3,5-diiodo-L-thyronine + AH2. It carries out the reaction L-thyronine + iodide + A + H(+) = 3-iodo-L-thyronine + AH2. It catalyses the reaction 3',5'-diiodo-L-thyronine + iodide + A + H(+) = 3,3',5'-triiodo-L-thyronine + AH2. The enzyme catalyses 3'-iodo-L-thyronine + iodide + A + H(+) = 3,3'-diiodo-L-thyronine + AH2. The catalysed reaction is 3,3',5'-triiodothyronamine + iodide + A + H(+) = 3,3',5,5'-tetraiodothyronamine + AH2. It carries out the reaction 3',5'-diiodothyronamine + iodide + A + H(+) = 3,3',5'-triiodothyronamine + AH2. It catalyses the reaction 3,3'-diiodothyronamine + iodide + A + H(+) = 3,3',5-triiodothyronamine + AH2. The enzyme catalyses 3-iodothyronamine + iodide + A + H(+) = 3,5-diiodothyronamine + AH2. The catalysed reaction is 3'-iodothyronamine + iodide + A + H(+) = 3,3'-diiodothyronamine + AH2. It carries out the reaction thyronamine + iodide + A + H(+) = 3-iodothyronamine + AH2. Functionally, plays a crucial role in the metabolism of thyroid hormones (TH) and has specific roles in TH activation and inactivation by deiodination. Catalyzes the deiodination of L-thyroxine (T4) to 3,3',5'-triiodothyronine (rT3), 3,5-diiodothyronine (3,5-T2) to 3-monoiodothyronine (3-T1), rT3 to 3',5'-diiodothyronine (3',5'-T2) and 3,3'-diiodothyronine (3,3'-T2) to 3'-monoiodothyronine (3'-T1) via inner-ring deiodination (IRD). Catalyzes the deiodination of 3,5,3'-triiodothyronine (T3) to 3,3'-diiodothyronine (3,3'-T2) via IRD. Catalyzes the deiodination of 3-T1 to L-thyronine (T0) via outer-ring deiodination (ORD). Catalyzes the tyrosyl ring deiodinations of T4AM (3,3',5,5'-tetraiodothyronamine), rT3AM (3,3',5'-triiodothyronamine), T3AM (3,5,3'-triiodothyronamine), 3,5-T2AM (3,5-diiodothyronamine), 3,3'-T2AM (3,3'-diiodothyronamine) and 3-T1AM (3-iodothyronamine). The sequence is that of Thyroxine 5-deiodinase (Dio3) from Rattus norvegicus (Rat).